Consider the following 400-residue polypeptide: Na(+)/H(+) antiporter NhaA (400 aa).

Transmembrane regions (helical) follow at residues 26-46 (AGGILLLFSAVVAMLLANSPL), 71-91 (LIHWINDGFMAVFFVLVGMEV), 107-127 (IFPAIAAIGGMVIPAVVYWFI), 137-157 (GWAIPMATDIAFALGIMALLS), 166-186 (IFLLALAIIDDLGAIVVIALF), 189-209 (HGLSVQALIFSAVAIIVLILL), 212-232 (FKVSALCAYMVVGAILWASVL), 233-253 (KSGVHATLAGVIIGFSIPLKG), 273-293 (FVILPLFAFANAGVSFAGIDV), 299-319 (PLLLAIASGLIIGKPVGIFGF), 340-360 (IFAVAVLCGIGFTMSMFLASL), and 373-393 (LSRLGILLGSTVSAILGYLFL).

This sequence belongs to the NhaA Na(+)/H(+) (TC 2.A.33) antiporter family.

The protein localises to the cell inner membrane. The enzyme catalyses Na(+)(in) + 2 H(+)(out) = Na(+)(out) + 2 H(+)(in). Its function is as follows. Na(+)/H(+) antiporter that extrudes sodium in exchange for external protons. The chain is Na(+)/H(+) antiporter NhaA from Haemophilus influenzae (strain 86-028NP).